The primary structure comprises 395 residues: Protein maternal effect lethal 26 (395 aa).

Residues 41 to 162 (KVQHTWTVKN…RDMIIVNVEI (122 aa)) enclose the MATH domain. Residues 201–269 (CDFAINVNGK…IYCGRCNKDI (69 aa)) enclose the BTB domain.

Interacts (via BTB domain) with cul-3. Seems to be a component of a E3 ubiquitin-protein ligase complex containing cul-3. Interacts (probably via MATH domain) with mei-1, which targets mei-1 for ubiquitin-mediated proteolysis. Interacts (probably via MATH domain) with ppfr-1, the regulatory subunit of the PP4 complex; targets ppfr-1 for ubiquitin-mediated proteolysis. May interact (via MATH domain) with unc-89 (via Ig-like C2-type domain 2/3 and, Ig-like C2-type domain 50 and fibronectin type-III domain 2). In terms of tissue distribution, expressed in body wall muscles.

The protein localises to the cytoplasm. It is found in the myofibril. Its subcellular location is the sarcomere. It localises to the m line. The protein resides in the i band. The protein operates within protein modification; protein ubiquitination. Its function is as follows. Probable substrate-specific adapter of an E3 ubiquitin-protein ligase complex which mediates the ubiquitination and subsequent proteasomal degradation of target proteins. Controls degradation of microtubule severing protein mei-1 after meiosis. Controls degradation of ppfr-1, the regulatory subunit of PP4 complex, after meiosis. In body wall muscles, involved in the organization of myosin thick filaments, likely by regulating the degradation of mei-1 downstream of unc-89. May also activate the TORC1 pathway. In Caenorhabditis elegans, this protein is Protein maternal effect lethal 26 (mel-26).